The sequence spans 499 residues: Nucleoside transporter 2 (499 aa).

The Cytoplasmic portion of the chain corresponds to 1 to 30; the sequence is MTGQSAAVEGSNSALPWYRMGFHTLAEFNT. Helical transmembrane passes span 31-51, 112-132, 133-153, 179-199, and 212-232; these read YVTF…VTSA, LFLG…VPAA, TIPT…MGGL, WGLT…QVSM, and IYFG…VLLR. The span at 255–267 shows a compositional bias: basic and acidic residues; that stretch reads VEPEESQDSKEPA. The segment at 255–276 is disordered; that stretch reads VEPEESQDSKEPATGDVAEAPK. A glycan (N-linked (GlcNAc...) asparagine) is linked at asparagine 326. The next 5 membrane-spanning stretches (helical) occupy residues 350-370, 378-398, 406-426, 428-448, and 475-495; these read LCAF…FFLV, MTII…LLMI, KLVI…VLCV, GFIP…LTNG, and MLAG…SLAI.

This sequence belongs to the SLC29A/ENT transporter (TC 2.A.57) family.

It is found in the cell membrane. The protein localises to the cell projection. Its subcellular location is the cilium. It localises to the flagellum. The catalysed reaction is inosine(in) + H(+)(in) = inosine(out) + H(+)(out). It catalyses the reaction guanosine(in) + H(+)(in) = guanosine(out) + H(+)(out). The enzyme catalyses xanthosine(in) + H(+)(in) = xanthosine(out) + H(+)(out). Its function is as follows. High affinity nucleoside:H(+) symporter; transports inosine and guanosine. Can transport xanthosine. This is Nucleoside transporter 2 from Leishmania donovani.